The primary structure comprises 343 residues: Cytoplasmic tRNA 2-thiolation protein 1 (343 aa).

It belongs to the TtcA family. CTU1/NCS6/ATPBD3 subfamily.

The protein localises to the cytoplasm. It participates in tRNA modification; 5-methoxycarbonylmethyl-2-thiouridine-tRNA biosynthesis. Its function is as follows. Plays a central role in 2-thiolation of mcm(5)S(2)U at tRNA wobble positions of tRNA(Lys), tRNA(Glu) and tRNA(Gln). Directly binds tRNAs and probably acts by catalyzing adenylation of tRNAs, an intermediate required for 2-thiolation. It is unclear whether it acts as a sulfurtransferase that transfers sulfur from thiocarboxylated URM1 onto the uridine of tRNAs at wobble position. The polypeptide is Cytoplasmic tRNA 2-thiolation protein 1 (Drosophila virilis (Fruit fly)).